The following is a 238-amino-acid chain: Ribonuclease 3 (238 aa).

One can recognise an RNase III domain in the interval 9 to 141 (LIDFMEKIGY…VVAAVYIDGG (133 aa)). Glu54 contacts Mg(2+). The active site involves Asp58. Positions 127 and 130 each coordinate Mg(2+). Glu130 is a catalytic residue. The DRBM domain maps to 168 to 237 (DYKTSLQEIT…ARRAIEKLKG (70 aa)).

This sequence belongs to the ribonuclease III family. As to quaternary structure, homodimer. The cofactor is Mg(2+).

The protein localises to the cytoplasm. It catalyses the reaction Endonucleolytic cleavage to 5'-phosphomonoester.. Functionally, digests double-stranded RNA. Involved in the processing of primary rRNA transcript to yield the immediate precursors to the large and small rRNAs (23S and 16S). Processes some mRNAs, and tRNAs when they are encoded in the rRNA operon. Processes pre-crRNA and tracrRNA of type II CRISPR loci if present in the organism. The protein is Ribonuclease 3 of Pseudothermotoga lettingae (strain ATCC BAA-301 / DSM 14385 / NBRC 107922 / TMO) (Thermotoga lettingae).